The sequence spans 129 residues: Large ribosomal subunit protein bL12 (129 aa).

The span at 95–123 (MVESTPKSIKEGVSKEDAEEAKKSLEDAG) shows a compositional bias: basic and acidic residues. Residues 95–129 (MVESTPKSIKEGVSKEDAEEAKKSLEDAGGKASLK) are disordered.

Belongs to the bacterial ribosomal protein bL12 family. As to quaternary structure, homodimer. Part of the ribosomal stalk of the 50S ribosomal subunit. Forms a multimeric L10(L12)X complex, where L10 forms an elongated spine to which 2 to 4 L12 dimers bind in a sequential fashion. Binds GTP-bound translation factors.

Functionally, forms part of the ribosomal stalk which helps the ribosome interact with GTP-bound translation factors. Is thus essential for accurate translation. This Acaryochloris marina (strain MBIC 11017) protein is Large ribosomal subunit protein bL12.